The following is a 172-amino-acid chain: ATP synthase subunit b (172 aa).

Residues 27–47 (LAIVIFGLYKFLPPFIGGILE) form a helical membrane-spanning segment.

This sequence belongs to the ATPase B chain family. As to quaternary structure, F-type ATPases have 2 components, F(1) - the catalytic core - and F(0) - the membrane proton channel. F(1) has five subunits: alpha(3), beta(3), gamma(1), delta(1), epsilon(1). F(0) has four main subunits: a(1), b(1), b'(1) and c(10-14). The alpha and beta chains form an alternating ring which encloses part of the gamma chain. F(1) is attached to F(0) by a central stalk formed by the gamma and epsilon chains, while a peripheral stalk is formed by the delta, b and b' chains.

Its subcellular location is the cellular thylakoid membrane. Functionally, f(1)F(0) ATP synthase produces ATP from ADP in the presence of a proton or sodium gradient. F-type ATPases consist of two structural domains, F(1) containing the extramembraneous catalytic core and F(0) containing the membrane proton channel, linked together by a central stalk and a peripheral stalk. During catalysis, ATP synthesis in the catalytic domain of F(1) is coupled via a rotary mechanism of the central stalk subunits to proton translocation. Component of the F(0) channel, it forms part of the peripheral stalk, linking F(1) to F(0). The polypeptide is ATP synthase subunit b (Prochlorococcus marinus (strain MIT 9313)).